Reading from the N-terminus, the 279-residue chain is Beta-lactamase (279 aa).

A signal peptide spans 1–21 (MRYVRLCVISLLATLPLVVYA). Serine 66 acts as the Acyl-ester intermediate in catalysis. Cysteine 73 and cysteine 119 are oxidised to a cystine. Position 230 to 232 (230 to 232 (KTG)) interacts with substrate.

The protein belongs to the class-A beta-lactamase family.

It catalyses the reaction a beta-lactam + H2O = a substituted beta-amino acid. This is Beta-lactamase from Klebsiella pneumoniae.